The sequence spans 698 residues: eEF1A lysine and N-terminal methyltransferase (698 aa).

At Met1 the chain carries N-acetylmethionine. Ser267 carries the phosphoserine modification. Residues 431–461 (KDTSHRAQKKRKKDRKKQRPADTSEDFPPAP) form a disordered region. Basic residues predominate over residues 436-448 (RAQKKRKKDRKKQ).

Belongs to the methyltransferase superfamily. As to quaternary structure, forms a tripartite complex containing GAB1, METTL13 and SPRY2. Within the complex interacts with GAB1 and SPRY2. As to expression, expressed in the inner ear (at protein level). Expression is detected in the cochlear duct, spiral limbus region, efferent and afferent nerves, and in spiral ganglion neurons (at protein level).

It localises to the cytoplasm. The protein resides in the nucleus. It is found in the mitochondrion. The catalysed reaction is L-lysyl-[protein] + S-adenosyl-L-methionine = N(6)-methyl-L-lysyl-[protein] + S-adenosyl-L-homocysteine + H(+). The enzyme catalyses N(6)-methyl-L-lysyl-[protein] + S-adenosyl-L-methionine = N(6),N(6)-dimethyl-L-lysyl-[protein] + S-adenosyl-L-homocysteine + H(+). It catalyses the reaction N-terminal glycyl-L-lysyl-L-glutamyl-[protein] + 3 S-adenosyl-L-methionine = N-terminal N,N,N-trimethyl-glycyl-L-lysyl-L-glutamyl-[protein] + 3 S-adenosyl-L-homocysteine + 3 H(+). In terms of biological role, dual methyltransferase that catalyzes methylation of elongation factor 1-alpha (EEF1A1 and EEF1A2) at two different positions, and is therefore involved in the regulation of mRNA translation. Via its C-terminus, methylates EEF1A1 and EEF1A2 at the N-terminal residue 'Gly-2'. Via its N-terminus dimethylates EEF1A1 and EEF1A2 at residue 'Lys-55'. Has no activity towards core histones H2A, H2B, H3 and H4. The polypeptide is eEF1A lysine and N-terminal methyltransferase (Mus musculus (Mouse)).